The sequence spans 138 residues: Acidic phospholipase A2 Cvv-E6b (138 aa).

Positions 1 to 16 are cleaved as a signal peptide; it reads MRTLWILAVLLLGVEG. Intrachain disulfides connect cysteine 42–cysteine 131, cysteine 44–cysteine 60, cysteine 59–cysteine 111, cysteine 65–cysteine 138, cysteine 66–cysteine 104, cysteine 73–cysteine 97, and cysteine 91–cysteine 102. Residues tyrosine 43, glycine 45, and glycine 47 each contribute to the Ca(2+) site. Histidine 63 is a catalytic residue. Aspartate 64 lines the Ca(2+) pocket. Aspartate 105 is a catalytic residue.

The cofactor is Ca(2+). In terms of tissue distribution, expressed by the venom gland.

Its subcellular location is the secreted. The enzyme catalyses a 1,2-diacyl-sn-glycero-3-phosphocholine + H2O = a 1-acyl-sn-glycero-3-phosphocholine + a fatty acid + H(+). Its function is as follows. Snake venom phospholipase A2 (PLA2) that shows very low inhibition of ADP-induced platelet aggregation in platelet-rich plasma of human, rabbit and guinea pig. PLA2 catalyzes the calcium-dependent hydrolysis of the 2-acyl groups in 3-sn-phosphoglycerides. The sequence is that of Acidic phospholipase A2 Cvv-E6b from Crotalus viridis viridis (Prairie rattlesnake).